A 947-amino-acid chain; its full sequence is MSKIPVFKGSFKSWLAKNDEKPAKSVLLEPKYRDHHEKIRNKENMEEGEKPVFVSMANPQPTREDYERYDEDRRLKDKARDLRIARRRNSATPEASPSSDQYFTPEPADDEFVTPSTSKKSQKPRSSDATPVSSKPPRYLPRTPLSEQYTSCLSRKMEENFSRMQELMISGHSPHEARQQTIQESSEQLEPRAKVTRSSSQPPPIDTLKPRVPRIESPLVKKTTETPIRRTSYVDTLVATHQIQLQYSDRVVVGVERQMTKLESIKNLAAANRSPIIAEEAKKRRNEAEAVRKLIEVETQNAKKRAVIQELKDRIDKLTQAQLAIHQLVSSQPFSGDPYNQRLLRSIDNWMALPFREFDIQTAREMLELARKMKITIDHFRNVATLHRNSKSLNRSLNTSRKSIAVKINPSSQLNQQSSSDAAPPPSMREASTQMTSRLAESAMTQTSPRRIGVEPLDLSQLLEKHNSSSQTTPPVVEPVLAEVSAEPQRPPVTLSMTAPVSTIAEFDSMLNSISLHNESLETVAEPFSRLKTDISFPSTVEETTPRSGRVSLDSESARRLSAGLSHYLEQVKKERESMEAQESESESMELEIPVVSEVSVTTESENLEEVVSEHSDSKSPETLVASDNGEDSSGGSEDPNATQFEHEIEEHKEPEKLGLIIDPEDEQDETKRFVNHDEFEQSLEEELEPRGNNDSADDSGFLLDNSPAPRLKSIFDNLPPAAASAAVTDTPRVPAEADETTFAGMDMEEYCQREFLKEISPIMVQKAIELQDELRGVDWLTAQDVWQPPSFKDVQMEFDDNFEYFDSFSILIWSAVVDLINKNYLKFGRKMTENEEIAFEAEALKMLQTEHGPESRKSEWCTDVKMSKKLEGMMPMELDYRYDVRRGLPDAEKQKYQWQQVQMTVIAARYANKNLINEANEVYATEKEKLGQMVLESEIDATVTDV.

Disordered stretches follow at residues 20 to 148 and 173 to 211; these read EKPA…LSEQ and SPHEARQQTIQESSEQLEPRAKVTRSSSQPPPIDTLKPR. Composition is skewed to basic and acidic residues over residues 30–50 and 62–84; these read PKYRDHHEKIRNKENMEEGEK and TREDYERYDEDRRLKDKARDLRI. Composition is skewed to polar residues over residues 90 to 102 and 179 to 188; these read SATPEASPSSDQY and QQTIQESSEQ. Positions 276-320 form a coiled coil; the sequence is IIAEEAKKRRNEAEAVRKLIEVETQNAKKRAVIQELKDRIDKLTQ. 4 disordered regions span residues 407–453, 575–594, 600–662, and 681–705; these read KINP…RRIG, ERESMEAQESESESMELEIP, SVTT…GLII, and EQSLEEELEPRGNNDSADDSGFLLD. The segment covering 411 to 422 has biased composition (low complexity); that stretch reads SSQLNQQSSSDA. The span at 430 to 449 shows a compositional bias: polar residues; it reads EASTQMTSRLAESAMTQTSP. Positions 563-591 form a coiled coil; it reads AGLSHYLEQVKKERESMEAQESESESMEL. Over residues 580-590 the composition is skewed to acidic residues; that stretch reads EAQESESESME. A compositionally biased stretch (basic and acidic residues) spans 645–657; sequence FEHEIEEHKEPEK.

In terms of assembly, interacts with phosphatase regulatory subunit rsa-1 and tpxl-1. May interact with spd-5. May interact with sys-1.

It localises to the cytoplasm. The protein localises to the cytoskeleton. The protein resides in the microtubule organizing center. It is found in the centrosome. Functionally, recruits rsa-1 and, thereby, phosphatase let-92/paa-1 complex to the centrosomes. Recruits sys-1/beta-catenin to mitotic centrosomes during the first embryonic cell divisions. The chain is Regulator of spindle assembly protein 2 from Caenorhabditis elegans.